The sequence spans 708 residues: Leukotoxin translocation ATP-binding protein LktB (708 aa).

The Peptidase C39 domain occupies Met-1–Val-126. The 283-residue stretch at Phe-155–Gln-437 folds into the ABC transmembrane type-1 domain. 5 helical membrane passes run Leu-159–Val-179, Leu-192–Leu-212, Ala-270–Tyr-290, Leu-296–Leu-316, and Val-389–Gly-409. Residues Ile-469 to Gln-704 form the ABC transporter domain. Residue Gly-503–Ser-510 participates in ATP binding.

It belongs to the ABC transporter superfamily. Protein-1 exporter (TC 3.A.1.109) family. In terms of assembly, homodimer.

Its subcellular location is the cell inner membrane. It catalyses the reaction ATP + H2O + proteinSide 1 = ADP + phosphate + proteinSide 2.. In terms of biological role, part of the ABC transporter complex LktBD involved in leukotoxin export. Transmembrane domains (TMD) form a pore in the inner membrane and the ATP-binding domain (NBD) is responsible for energy generation. The sequence is that of Leukotoxin translocation ATP-binding protein LktB (lktB) from Mannheimia haemolytica (Pasteurella haemolytica).